Consider the following 411-residue polypeptide: Lissencephaly-1 homolog (411 aa).

Residues 9-41 form the LisH domain; it reads QREELNQAIADYLGSNGYADSLETFRKEADLST. Residues 56–83 adopt a coiled-coil conformation; it reads TSVIRLQKKVMELEAKLTEAEKEVIEGA. 7 WD repeats span residues 106–147, 148–187, 191–230, 233–272, 275–334, 337–376, and 379–411; these read GHRA…RSLK, GHTDSVQDVAFDAQGKLLASCSADLSIKLWDFQQSYECIK, GHDHNVSSVAFVPAGDYVLSASRDRTIKMWEVATGYCVKT, GHREWVRMVRVHIEGSIFATCSNDQTIRVWLTNSKDCKVE, DHEH…CLLT, GHDNWVRGLAFHPGGKYLVSASDDKTIRVWDLRNKRCMKT, and AHQHFCTSIDFHKAHPYVISGSVDQTVKVWECR.

This sequence belongs to the WD repeat LIS1/nudF family.

It is found in the cytoplasm. Its subcellular location is the cytoskeleton. The protein localises to the microtubule organizing center. The protein resides in the centrosome. Positively regulates the activity of the minus-end directed microtubule motor protein dynein. May enhance dynein-mediated microtubule sliding by targeting dynein to the microtubule plus end. Required for several dynein- and microtubule-dependent processes. The polypeptide is Lissencephaly-1 homolog (Drosophila yakuba (Fruit fly)).